The sequence spans 415 residues: WD repeat and FYVE domain-containing protein 2 (415 aa).

4 WD repeats span residues 71–103, 119–148, 202–232, and 245–284; these read HHFM…YEFS, CHAG…IVWH, AHTN…IMWD, and GHNG…VETP. The FYVE-type zinc finger occupies 286 to 357; sequence WKTSDCCQKC…ICNDCNARMK (72 aa). Residues C292, C295, C319, C322, C327, C330, C349, and C352 each contribute to the Zn(2+) site. Residues 373 to 403 form a WD 5 repeat; sequence EIHTGITAMHLQETLGLLVTSGQNRVIMIWD.

Its function is as follows. Plays a role in coelomocyte endocytosis. This Caenorhabditis elegans protein is WD repeat and FYVE domain-containing protein 2 (wdfy-2).